We begin with the raw amino-acid sequence, 826 residues long: Protein lozenge (826 aa).

Disordered stretches follow at residues 1-45 (MHLH…ASQT), 87-171 (PVSV…WSSS), and 214-263 (ASVG…NNNN). Pro residues predominate over residues 12–24 (PPSPSPNPTPTPS). Positions 106–141 (SHHHHHLHHHYSPYHHAHPYHPPHPHAPHHHHHHHP) are enriched in basic residues. Residues 142-153 (PYPYPPAGPHPP) show a composition bias toward pro residues. The span at 156 to 171 (VTSSSTSPTGNGWSSS) shows a compositional bias: polar residues. In terms of domain architecture, Runt spans 275-403 (LVQKRQQEHP…TVDGPREPRS (129 aa)). A compositionally biased stretch (low complexity) spans 774-798 (QQQQQQQQQQQQVHHPQQQQVESAG). Residues 774 to 826 (QQQQQQQQQQQQVHHPQQQQVESAGEVGGSGAGGVESAREEDVGDLSQVWRPY) form a disordered region.

Expressed in the pupal eye during programmed cell death.

It is found in the nucleus. Its function is as follows. Involved in prepatterning photoreceptor precursors in the developing eye; in the larval eye disk it defines a subset of cells as an equipotential group that is competent to respond to the sevenless developmental signal and another subset that confer proper photoreceptor identity by positively regulating the homeo box gene Bar. Involved in the aop/pnt dynamic in a Ras-dependent manner to regulate pros expression. Promotes apoptosis in the pupal eye by directly activating aos and klu. Also modulates hid- and rpr-mediated cell death. Regulates amos function in olfactory sensilla development. The protein is Protein lozenge (lz) of Drosophila melanogaster (Fruit fly).